The following is a 550-amino-acid chain: Methionine--tRNA ligase (550 aa).

The 'HIGH' region motif lies at 12–22 (PYANGPLHFGH). Residues C144, C147, C157, and C160 each contribute to the Zn(2+) site. The 'KMSKS' region motif lies at 330-334 (QFSKS). K333 is a binding site for ATP.

It belongs to the class-I aminoacyl-tRNA synthetase family. MetG type 1 subfamily. In terms of assembly, monomer. Zn(2+) is required as a cofactor.

It localises to the cytoplasm. The enzyme catalyses tRNA(Met) + L-methionine + ATP = L-methionyl-tRNA(Met) + AMP + diphosphate. Is required not only for elongation of protein synthesis but also for the initiation of all mRNA translation through initiator tRNA(fMet) aminoacylation. The protein is Methionine--tRNA ligase of Chlamydia caviae (strain ATCC VR-813 / DSM 19441 / 03DC25 / GPIC) (Chlamydophila caviae).